The chain runs to 267 residues: FCS-Like Zinc finger 8 (267 aa).

Disordered stretches follow at residues methionine 1–proline 29 and aspartate 124–arginine 156. 2 stretches are compositionally biased toward polar residues: residues glutamate 15–threonine 28 and proline 126–proline 141. Residues serine 221–aspartate 265 form an FLZ-type zinc finger.

Belongs to the FLZ family. As to quaternary structure, interacts with KIN10 and KIN11 via its FLZ-type zinc finger domain. Interacts with KINB1, KINB2, KINB3 and SNF4 via its N-terminal part. Interacts with HB21/ZHD3.

In terms of biological role, may act as an adapter to facilitate the interaction of SnRK1 complex with effector proteins, conferring tissue- and stimulus-type specific differences in the SnRK1 regulation pathway. This Arabidopsis thaliana (Mouse-ear cress) protein is FCS-Like Zinc finger 8.